A 274-amino-acid polypeptide reads, in one-letter code: NH(3)-dependent NAD(+) synthetase (274 aa).

46–53 (GISGGQDS) is a binding site for ATP. Asp-52 is a Mg(2+) binding site. A deamido-NAD(+)-binding site is contributed by Arg-140. Position 160 (Thr-160) interacts with ATP. Glu-165 serves as a coordination point for Mg(2+). Residues Lys-173 and Asp-180 each contribute to the deamido-NAD(+) site. Residues Lys-189 and Thr-211 each coordinate ATP. 260–261 (HK) is a binding site for deamido-NAD(+).

The protein belongs to the NAD synthetase family. In terms of assembly, homodimer.

It catalyses the reaction deamido-NAD(+) + NH4(+) + ATP = AMP + diphosphate + NAD(+) + H(+). The protein operates within cofactor biosynthesis; NAD(+) biosynthesis; NAD(+) from deamido-NAD(+) (ammonia route): step 1/1. Its function is as follows. Catalyzes the ATP-dependent amidation of deamido-NAD to form NAD. Uses ammonia as a nitrogen source. This chain is NH(3)-dependent NAD(+) synthetase, found in Listeria monocytogenes serotype 4b (strain CLIP80459).